A 644-amino-acid chain; its full sequence is Threonine--tRNA ligase (644 aa).

The region spanning 1–61 (MNVSIEGQML…DGTTTIEPVY (61 aa)) is the TGS domain. Positions 241 to 532 (DHRKLGQQLD…LIEQYAGAFP (292 aa)) are catalytic. Zn(2+) is bound by residues cysteine 333, histidine 384, and histidine 509.

Belongs to the class-II aminoacyl-tRNA synthetase family. In terms of assembly, homodimer. Zn(2+) serves as cofactor.

It is found in the cytoplasm. It catalyses the reaction tRNA(Thr) + L-threonine + ATP = L-threonyl-tRNA(Thr) + AMP + diphosphate + H(+). Catalyzes the attachment of threonine to tRNA(Thr) in a two-step reaction: L-threonine is first activated by ATP to form Thr-AMP and then transferred to the acceptor end of tRNA(Thr). Also edits incorrectly charged L-seryl-tRNA(Thr). The protein is Threonine--tRNA ligase of Nitratidesulfovibrio vulgaris (strain ATCC 29579 / DSM 644 / CCUG 34227 / NCIMB 8303 / VKM B-1760 / Hildenborough) (Desulfovibrio vulgaris).